Here is a 593-residue protein sequence, read N- to C-terminus: Aspartate--tRNA ligase (593 aa).

Glutamate 180 provides a ligand contact to L-aspartate. Positions 204 to 207 are aspartate; the sequence is QLFK. Arginine 226 is an L-aspartate binding site. ATP is bound by residues 226–228 and glutamine 235; that span reads RDE. L-aspartate is bound at residue histidine 454. ATP is bound at residue glutamate 488. L-aspartate is bound at residue arginine 495. Residue 540-543 participates in ATP binding; the sequence is GFDR.

It belongs to the class-II aminoacyl-tRNA synthetase family. Type 1 subfamily. Homodimer.

Its subcellular location is the cytoplasm. The enzyme catalyses tRNA(Asp) + L-aspartate + ATP = L-aspartyl-tRNA(Asp) + AMP + diphosphate. Catalyzes the attachment of L-aspartate to tRNA(Asp) in a two-step reaction: L-aspartate is first activated by ATP to form Asp-AMP and then transferred to the acceptor end of tRNA(Asp). In Clostridium novyi (strain NT), this protein is Aspartate--tRNA ligase.